We begin with the raw amino-acid sequence, 478 residues long: Alpha,alpha-trehalose-phosphate synthase [UDP-forming] (478 aa).

Residues tyrosine 89 and aspartate 143 each coordinate D-glucose 6-phosphate. Residues arginine 280 and lysine 285 each coordinate UDP. UDP-alpha-D-glucose-binding residues include arginine 280 and lysine 285. Arginine 318 is a binding site for D-glucose 6-phosphate. UDP-binding positions include isoleucine 357 and 383 to 387 (LVSYE). Residues isoleucine 357 and 379 to 387 (DGMNLVSYE) each bind UDP-alpha-D-glucose.

This sequence belongs to the glycosyltransferase 20 family.

The enzyme catalyses D-glucose 6-phosphate + UDP-alpha-D-glucose = alpha,alpha-trehalose 6-phosphate + UDP + H(+). It functions in the pathway carbohydrate biosynthesis. With respect to regulation, inhibited by validoxylamine A, a non-reactive trehalose analog. In terms of biological role, synthase catalytic subunit of the trehalose synthase complex that catalyzes the production of trehalose from glucose-6-phosphate and UDP-alpha-D-glucose in a two step process. This Candida albicans (strain SC5314 / ATCC MYA-2876) (Yeast) protein is Alpha,alpha-trehalose-phosphate synthase [UDP-forming].